We begin with the raw amino-acid sequence, 692 residues long: Ribosome-releasing factor 2, mitochondrial (692 aa).

Residues 1–29 constitute a mitochondrion transit peptide; it reads MLKYAWQSGPKQRNRWLWHLSNQIWKRSY. Residues 31–310 form the tr-type G domain; the sequence is SKIRNIGILA…AVNAYLPAPE (280 aa). Residues 40-47, 104-108, and 158-161 each bind GTP; these read AHIDAGKT, DTPGH, and NKMD.

Belongs to the TRAFAC class translation factor GTPase superfamily. Classic translation factor GTPase family. EF-G/EF-2 subfamily.

Its subcellular location is the mitochondrion. Mitochondrial GTPase that mediates the disassembly of ribosomes from messenger RNA at the termination of mitochondrial protein biosynthesis. Not involved in the GTP-dependent ribosomal translocation step during translation elongation. The chain is Ribosome-releasing factor 2, mitochondrial from Drosophila sechellia (Fruit fly).